The sequence spans 1183 residues: DNA-directed RNA polymerase subunit beta (1183 aa).

The protein belongs to the RNA polymerase beta chain family. The RNAP catalytic core consists of 2 alpha, 1 beta, 1 beta' and 1 omega subunit. When a sigma factor is associated with the core the holoenzyme is formed, which can initiate transcription.

It carries out the reaction RNA(n) + a ribonucleoside 5'-triphosphate = RNA(n+1) + diphosphate. Functionally, DNA-dependent RNA polymerase catalyzes the transcription of DNA into RNA using the four ribonucleoside triphosphates as substrates. The chain is DNA-directed RNA polymerase subunit beta from Staphylococcus aureus (strain JH9).